Reading from the N-terminus, the 202-residue chain is N-(5'-phosphoribosyl)anthranilate isomerase (202 aa).

This sequence belongs to the TrpF family.

It carries out the reaction N-(5-phospho-beta-D-ribosyl)anthranilate = 1-(2-carboxyphenylamino)-1-deoxy-D-ribulose 5-phosphate. It functions in the pathway amino-acid biosynthesis; L-tryptophan biosynthesis; L-tryptophan from chorismate: step 3/5. The sequence is that of N-(5'-phosphoribosyl)anthranilate isomerase from Listeria welshimeri serovar 6b (strain ATCC 35897 / DSM 20650 / CCUG 15529 / CIP 8149 / NCTC 11857 / SLCC 5334 / V8).